The following is a 353-amino-acid chain: MKDTIPTAETASRRPEPAARGGRPRRRKLTFDRVTFFLAFLGVPLAIFVIFVLIPFGQAIFWGMTDWRGFSPDYNFVGFDNFTKMFQDDIFLKALRNVALLAAFVPLVTLTLALGVAVAITLGGPSKGPVRGIRGASFYRIISFFPYVVPAIIVGLIWAQMYDPNAGLLNGVLTGLGLDQFDTFAWLGEKAAAMPAVMFVIVWGLVGFYAVLFIAAIKGVPGELYEAAKIDGAGRFRTTISITLPAIRDSVQTAYIYLGIAALDAFVYVQAMVPNGGPDNSTLTISQRLFNVAFAKQQFGYATAMGVVLAAVTLVFAALVFLVNRLTGGGEGESKRKAPGSRARRAAAKGGAR.

The disordered stretch occupies residues 1-24 (MKDTIPTAETASRRPEPAARGGRP). 6 helical membrane passes run 36–56 (FFLA…LIPF), 100–120 (LLAA…AVAI), 141–161 (IISF…WAQM), 197–217 (VMFV…IAAI), 254–274 (AYIY…AMVP), and 303–323 (TAMG…VFLV). The region spanning 95–320 (LRNVALLAAF…AVTLVFAALV (226 aa)) is the ABC transmembrane type-1 domain. Positions 329-353 (GGEGESKRKAPGSRARRAAAKGGAR) are disordered. Basic residues predominate over residues 337-353 (KAPGSRARRAAAKGGAR).

This sequence belongs to the binding-protein-dependent transport system permease family. In terms of assembly, the complex is composed of two ATP-binding proteins (MsiK), two transmembrane proteins (NgcF and NgcG) and a solute-binding protein (NgcE).

It is found in the cell membrane. Functionally, part of the ABC transporter complex NgcEFG-MsiK involved in N,N'-diacetylchitobiose ((GlcNAc)2) uptake. Responsible for the translocation of the substrate across the membrane. The chain is Diacetylchitobiose uptake system permease protein NgcF from Streptomyces coelicolor (strain ATCC BAA-471 / A3(2) / M145).